The following is a 151-amino-acid chain: Acidic phospholipase A2 1 (151 aa).

The signal sequence occupies residues 1-21 (MNPAHLLVLSAVCVSLLGASS). Residues 22-27 (IPPQPL) constitute a propeptide that is removed on maturation. 7 disulfide bridges follow: Cys-38–Cys-104, Cys-54–Cys-151, Cys-56–Cys-72, Cys-71–Cys-132, Cys-78–Cys-125, Cys-88–Cys-118, and Cys-111–Cys-123. The Ca(2+) site is built by Tyr-55, Gly-57, and Gly-59. Residue His-75 is part of the active site. Asp-76 provides a ligand contact to Ca(2+). Asp-126 is a catalytic residue.

Requires Ca(2+) as cofactor. As to expression, expressed by the venom gland.

Its subcellular location is the secreted. It carries out the reaction a 1,2-diacyl-sn-glycero-3-phosphocholine + H2O = a 1-acyl-sn-glycero-3-phosphocholine + a fatty acid + H(+). Its function is as follows. Snake venom phospholipase A2 (PLA2) that may exhibit cardiotoxicity, myotoxicity, antiplatelet activity, and edema-inducing activity. PLA2 catalyzes the calcium-dependent hydrolysis of the 2-acyl groups in 3-sn-phosphoglycerides. The polypeptide is Acidic phospholipase A2 1 (Ophiophagus hannah (King cobra)).